A 206-amino-acid polypeptide reads, in one-letter code: Small ribosomal subunit protein uS4 (206 aa).

The region spanning 98–164 (MRLDNVVYRL…EKFKTFIENP (67 aa)) is the S4 RNA-binding domain.

Belongs to the universal ribosomal protein uS4 family. In terms of assembly, part of the 30S ribosomal subunit. Contacts protein S5. The interaction surface between S4 and S5 is involved in control of translational fidelity.

Functionally, one of the primary rRNA binding proteins, it binds directly to 16S rRNA where it nucleates assembly of the body of the 30S subunit. Its function is as follows. With S5 and S12 plays an important role in translational accuracy. The polypeptide is Small ribosomal subunit protein uS4 (Clostridium tetani (strain Massachusetts / E88)).